Consider the following 480-residue polypeptide: MALTQGTKRKVCYYYDGDVGNYYYGQGHPMKPHRIRMTHNLLLNYGLYRKMEIYRPHKANAEEMTKYHSDDYIKFLRSIRPDNMSEYSKQMQRFNVGEDCPVFDGLFEFCQLSAGGSVASAVKLNKQQTDIAVNWAGGLHHAKKSEASGFCYVNDIVLAILELLKYHQRVLYIDIDIHHGDGVEEAFYTTDRVMTVSFHKYGEYFPGTGDLRDIGAGKGKYYAVNYPLRDGIDDESYEAIFKPVISKVMETFQPSAVVLQCGSDSLSGDRLGCFNLTIKGHAKCVEFVKSFNLPMLMLGGGGYTIRNVARCWTYETAVALDTEIPNELPYNDYFEYFGPDFKLHISPSNMTNQNTNEYLEKIKQRLFENLRMLPHAPGVQMQPIPEDAVQEDSGDEEEEDPEKRISIRNSDKRISCDEEFSDSEDEGEGGRKNVANFKKAKRVKTEEEKEEEEKKDEKEEEKAKEEKAEPKGVKEETKST.

The histone deacetylase stretch occupies residues Arg-9–Asp-321. 1D-myo-inositol 1,4,5,6-tetrakisphosphate is bound by residues Gly-27 and Lys-31. His-141 is an active-site residue. The Zn(2+) site is built by Asp-176, His-178, and Asp-264. Arg-270 provides a ligand contact to 1D-myo-inositol 1,4,5,6-tetrakisphosphate. Residues Ala-376–Thr-480 are disordered. Residues Ala-388–Asp-400 are compositionally biased toward acidic residues. The segment covering Pro-401–Cys-416 has biased composition (basic and acidic residues). Residues Asp-417–Gly-427 are compositionally biased toward acidic residues. A compositionally biased stretch (basic and acidic residues) spans Lys-455–Thr-480.

It belongs to the histone deacetylase family. HD type 1 subfamily. Requires Zn(2+) as cofactor.

It localises to the nucleus. The catalysed reaction is N(6)-acetyl-L-lysyl-[histone] + H2O = L-lysyl-[histone] + acetate. The enzyme catalyses N(6)-acetyl-L-lysyl-[protein] + H2O = L-lysyl-[protein] + acetate. It carries out the reaction N(6)-(2E)-butenoyl-L-lysyl-[protein] + H2O = (2E)-2-butenoate + L-lysyl-[protein]. It catalyses the reaction N(6)-[(S)-lactoyl]-L-lysyl-[protein] + H2O = (S)-lactate + L-lysyl-[protein]. Inositol tetraphosphate (1D-myo-inositol 1,4,5,6-tetrakisphosphate) may act as an intermolecular glue between HDAC1 and N-Cor repressor complex components. Its function is as follows. Histone deacetylase that catalyzes the deacetylation of lysine residues on the N-terminal part of the core histones (H2A, H2B, H3 and H4). Histone deacetylation gives a tag for epigenetic repression and plays an important role in transcriptional regulation, cell cycle progression and developmental events. Histone deacetylases act via the formation of large multiprotein complexes. Also functions as a deacetylase for non-histone proteins. In addition to protein deacetylase activity, also has protein-lysine deacylase activity: acts as a protein decrotonylase and delactylase by mediating decrotonylation ((2E)-butenoyl) and delactylation (lactoyl) of histones, respectively. The protein is Histone deacetylase 1 (HDAC1) of Gallus gallus (Chicken).